The following is a 126-amino-acid chain: Small ribosomal subunit protein uS13 (126 aa).

A disordered region spans residues 96–126; it reads LPVHGQRTHTNARTRKGPRRAIAGKKKAGKK.

This sequence belongs to the universal ribosomal protein uS13 family. As to quaternary structure, part of the 30S ribosomal subunit. Forms a loose heterodimer with protein S19. Forms two bridges to the 50S subunit in the 70S ribosome.

In terms of biological role, located at the top of the head of the 30S subunit, it contacts several helices of the 16S rRNA. In the 70S ribosome it contacts the 23S rRNA (bridge B1a) and protein L5 of the 50S subunit (bridge B1b), connecting the 2 subunits; these bridges are implicated in subunit movement. Contacts the tRNAs in the A and P-sites. The chain is Small ribosomal subunit protein uS13 from Frankia alni (strain DSM 45986 / CECT 9034 / ACN14a).